A 406-amino-acid chain; its full sequence is Biofilm regulatory protein A (406 aa).

The N-terminal stretch at 1 to 26 (MKIGKKILIMLVTIFLTSLVALGVYA) is a signal peptide. Positions 347 to 397 (SSSASDYSSSGNYSGSSSDYGSSSSYGSNSSSGSSSDYSGQNSYNQGNYQQ) are enriched in low complexity. The segment at 347-406 (SSSASDYSSSGNYSGSSSDYGSSSSYGSNSSSGSSSDYSGQNSYNQGNYQQPAAGTGIGN) is disordered.

It belongs to the LytR/CpsA/Psr (LCP) family.

The protein localises to the cell envelope. Involved in biofilm formation, cell division, autolysis and the regulation of acid and oxidative stress tolerance. May be associated with systemic virulence in blood. The sequence is that of Biofilm regulatory protein A (brpA) from Streptococcus mutans serotype c (strain ATCC 700610 / UA159).